A 309-amino-acid chain; its full sequence is Large ribosomal subunit protein uL22m (309 aa).

Residues 1-25 (MNFHTARISQVGVISRALLSSVSRR) constitute a mitochondrion transit peptide. A disordered region spans residues 40-63 (SLFGSITENKPKEGKNRGDEDAGS). Residues 48 to 59 (NKPKEGKNRGDE) show a composition bias toward basic and acidic residues.

The protein belongs to the universal ribosomal protein uL22 family. In terms of assembly, component of the mitochondrial large ribosomal subunit (mt-LSU). Mature yeast 74S mitochondrial ribosomes consist of a small (37S) and a large (54S) subunit. The 37S small subunit contains a 15S ribosomal RNA (15S mt-rRNA) and 34 different proteins. The 54S large subunit contains a 21S rRNA (21S mt-rRNA) and 46 different proteins. uL22m forms the wall of the exit tunnel.

It localises to the mitochondrion. Functionally, component of the mitochondrial ribosome (mitoribosome), a dedicated translation machinery responsible for the synthesis of mitochondrial genome-encoded proteins, including at least some of the essential transmembrane subunits of the mitochondrial respiratory chain. The mitoribosomes are attached to the mitochondrial inner membrane and translation products are cotranslationally integrated into the membrane. The chain is Large ribosomal subunit protein uL22m (MRPL22) from Saccharomyces cerevisiae (strain ATCC 204508 / S288c) (Baker's yeast).